The primary structure comprises 341 residues: Fructose-1,6-bisphosphatase, cytosolic (341 aa).

5 residues coordinate Mg(2+): Glu-71, Glu-100, Asp-121, Leu-123, and Asp-124. Substrate is bound by residues Asp-124–Ser-127, Asn-215, Tyr-247, Tyr-267, and Lys-277. Glu-283 lines the Mg(2+) pocket.

The protein belongs to the FBPase class 1 family. It depends on Mg(2+) as a cofactor.

The protein localises to the cytoplasm. It catalyses the reaction beta-D-fructose 1,6-bisphosphate + H2O = beta-D-fructose 6-phosphate + phosphate. The sequence is that of Fructose-1,6-bisphosphatase, cytosolic from Beta vulgaris (Sugar beet).